We begin with the raw amino-acid sequence, 174 residues long: Shikimate kinase 2 (174 aa).

12–17 contacts ATP; the sequence is GCGKTT. Mg(2+) contacts are provided by Thr16 and Asp32. Residues Asp34, Arg58, and Gly79 each coordinate substrate. The segment at 112 to 126 is LID domain; that stretch reads QAAPEEDLRPTLTGK. Arg120 serves as a coordination point for ATP. A substrate-binding site is contributed by Arg139.

The protein belongs to the shikimate kinase family. AroL subfamily. Monomer. Mg(2+) is required as a cofactor.

The protein resides in the cytoplasm. The catalysed reaction is shikimate + ATP = 3-phosphoshikimate + ADP + H(+). It participates in metabolic intermediate biosynthesis; chorismate biosynthesis; chorismate from D-erythrose 4-phosphate and phosphoenolpyruvate: step 5/7. In terms of biological role, catalyzes the specific phosphorylation of the 3-hydroxyl group of shikimic acid using ATP as a cosubstrate. This is Shikimate kinase 2 from Shigella boydii serotype 4 (strain Sb227).